Consider the following 274-residue polypeptide: Large ribosomal subunit protein uL2 (274 aa).

The segment at 223 to 256 is disordered; the sequence is VAMNPVDHPHGGGEGRTSGGRHPVTPWGIPTKGY.

It belongs to the universal ribosomal protein uL2 family. As to quaternary structure, part of the 50S ribosomal subunit. Forms a bridge to the 30S subunit in the 70S ribosome.

One of the primary rRNA binding proteins. Required for association of the 30S and 50S subunits to form the 70S ribosome, for tRNA binding and peptide bond formation. It has been suggested to have peptidyltransferase activity; this is somewhat controversial. Makes several contacts with the 16S rRNA in the 70S ribosome. The protein is Large ribosomal subunit protein uL2 of Trichlorobacter lovleyi (strain ATCC BAA-1151 / DSM 17278 / SZ) (Geobacter lovleyi).